Consider the following 527-residue polypeptide: Nucleus accumbens-associated protein 1 (527 aa).

Residues 30–94 (CDVSVVVKGH…CYTGRLSMNV (65 aa)) form the BTB domain. Residues 131-153 (QGLHAEEAPSSEPQSPVAQTSGW) are disordered. Over residues 141 to 152 (SEPQSPVAQTSG) the composition is skewed to polar residues. Lysine 167 participates in a covalent cross-link: Glycyl lysine isopeptide (Lys-Gly) (interchain with G-Cter in SUMO1); alternate. Residue lysine 167 forms a Glycyl lysine isopeptide (Lys-Gly) (interchain with G-Cter in SUMO2); alternate linkage. Residue lysine 183 forms a Glycyl lysine isopeptide (Lys-Gly) (interchain with G-Cter in SUMO2) linkage. Serine 188 is subject to Phosphoserine. The segment at 210-292 (DLAANRPHQP…DEEEDGGEEG (83 aa)) is disordered. The span at 225 to 251 (APVVAAAQPAVAAGAGQPAGGVAAAGG) shows a compositional bias: low complexity. Positions 255-277 (GPSTSERTSPGTSSAYTSDSPGS) are enriched in polar residues. Serine 259 is modified (phosphoserine; by PKC). The span at 281-292 (EEDEEEDGGEEG) shows a compositional bias: acidic residues. Residues lysine 318, lysine 452, lysine 480, lysine 483, and lysine 498 each participate in a glycyl lysine isopeptide (Lys-Gly) (interchain with G-Cter in SUMO2) cross-link. The region spanning 374–471 (GTNVYITRAQ…DMCTNARRVV (98 aa)) is the BEN domain.

As to quaternary structure, homooligomer; mediated by the BTB domain. Interacts with HDAC3 and HDAC4. Interacts (via BTB domain) with CUL3, PSMD7 and RCOR1. As to expression, overexpressed in several types of carcinomas including ovarian serous carcinomas. Expression levels positively correlate with tumor recurrence in ovarian serous carcinomas, and intense immunoreactivity in primary ovarian tumors predicts early recurrence. Up-regulated in ovarian carcinomas after chemotherapy, suggesting a role in development of chemotherapy resistance in ovarian cancer.

It is found in the nucleus. The protein localises to the cytoplasm. Functionally, functions as a transcriptional repressor. Seems to function as a transcriptional corepressor in neuronal cells through recruitment of HDAC3 and HDAC4. Contributes to tumor progression, and tumor cell proliferation and survival. This may be mediated at least in part through repressing transcriptional activity of GADD45GIP1. Required for recruiting the proteasome from the nucleus to the cytoplasm and dendritic spines. The protein is Nucleus accumbens-associated protein 1 (NACC1) of Homo sapiens (Human).